The sequence spans 447 residues: ATP-dependent protease ATPase subunit HslU (447 aa).

ATP is bound by residues Ile-17, 59–64, Asp-256, Glu-321, and Arg-393; that span reads GVGKTE.

It belongs to the ClpX chaperone family. HslU subfamily. As to quaternary structure, a double ring-shaped homohexamer of HslV is capped on each side by a ring-shaped HslU homohexamer. The assembly of the HslU/HslV complex is dependent on binding of ATP.

Its subcellular location is the cytoplasm. Functionally, ATPase subunit of a proteasome-like degradation complex; this subunit has chaperone activity. The binding of ATP and its subsequent hydrolysis by HslU are essential for unfolding of protein substrates subsequently hydrolyzed by HslV. HslU recognizes the N-terminal part of its protein substrates and unfolds these before they are guided to HslV for hydrolysis. The chain is ATP-dependent protease ATPase subunit HslU from Pseudomonas putida (strain GB-1).